We begin with the raw amino-acid sequence, 304 residues long: MKRAHPDYSSSDSELDETVEVEKESADENGNLSSALGSMSPTTSSQILARKRRRGIIEKRRRDRINNSLSELRRLVPSAFEKQGSAKLEKAEILQMTVDHLKMLHTAGGKGYFDAHALAMDYRSLGFRECLAEVARYLSIIEGLDASDPLRVRLVSHLNNYASQREAASGAHAGLGHLPWGSAFGHHPHVAHPLLLPQSGHGNTGTSASPTDPHHQGRLAAAHPEAPALRAPPSGGLGPVLPVVTSASKLSPPLLSSVASLSAFPFSFGSFHLLSPNALSPSAPTQAANLGKPYRPWGTEIGAF.

Residues 1–52 (MKRAHPDYSSSDSELDETVEVEKESADENGNLSSALGSMSPTTSSQILARKR) form a disordered region. Positions 28–47 (ENGNLSSALGSMSPTTSSQI) are enriched in polar residues. The interval 48–117 (LARKRRRGII…GGKGYFDAHA (70 aa)) is transcriptional repression and interaction with NCOR1 and SIN3A. Positions 49–104 (ARKRRRGIIEKRRRDRINNSLSELRRLVPSAFEKQGSAKLEKAEILQMTVDHLKML) constitute a bHLH domain. In terms of domain architecture, Orange spans 122–158 (YRSLGFRECLAEVARYLSIIEGLDASDPLRVRLVSHL). The segment at 191–234 (AHPLLLPQSGHGNTGTSASPTDPHHQGRLAAAHPEAPALRAPPS) is disordered. Residues 200–210 (GHGNTGTSASP) show a composition bias toward polar residues. Low complexity predominate over residues 218-234 (RLAAAHPEAPALRAPPS).

The protein belongs to the HEY family. In terms of assembly, self-associates. Interacts with HES1 and HEYL. Interacts with HDAC1, NCOR1 and SIN3A. Interacts with GATA4 and GATA6. Interacts with CCDC89/BOIP.

The protein resides in the nucleus. Functionally, transcriptional repressor which binds preferentially to the canonical E box sequence 5'-CACGTG-3'. Downstream effector of Notch signaling required for cardiovascular development. Specifically required for the Notch-induced endocardial epithelial to mesenchymal transition, which is itself criticial for cardiac valve and septum development. May be required in conjunction with HEY2 to specify arterial cell fate or identity. Promotes maintenance of neuronal precursor cells and glial versus neuronal fate specification. Represses transcription by the cardiac transcriptional activators GATA4 and GATA6 and by the neuronal bHLH factors ASCL1/MASH1 and NEUROD4/MATH3. The sequence is that of Hairy/enhancer-of-split related with YRPW motif protein 1 (HEY1) from Canis lupus familiaris (Dog).